The following is a 403-amino-acid chain: Phosphopentomutase (403 aa).

Mn(2+)-binding residues include Asp13, Asp298, His303, Asp339, His340, and His351.

It belongs to the phosphopentomutase family. It depends on Mn(2+) as a cofactor.

It localises to the cytoplasm. The catalysed reaction is 2-deoxy-alpha-D-ribose 1-phosphate = 2-deoxy-D-ribose 5-phosphate. The enzyme catalyses alpha-D-ribose 1-phosphate = D-ribose 5-phosphate. It participates in carbohydrate degradation; 2-deoxy-D-ribose 1-phosphate degradation; D-glyceraldehyde 3-phosphate and acetaldehyde from 2-deoxy-alpha-D-ribose 1-phosphate: step 1/2. Its function is as follows. Isomerase that catalyzes the conversion of deoxy-ribose 1-phosphate (dRib-1-P) and ribose 1-phosphate (Rib-1-P) to deoxy-ribose 5-phosphate (dRib-5-P) and ribose 5-phosphate (Rib-5-P), respectively. The protein is Phosphopentomutase of Streptococcus pyogenes serotype M4 (strain MGAS10750).